A 580-amino-acid polypeptide reads, in one-letter code: Kelch-like protein 38 (580 aa).

The BTB domain occupies Thr-34 to Ala-101. Positions Cys-136–Ala-237 constitute a BACK domain. 6 Kelch repeats span residues Phe-284 to Arg-331, Val-333 to Asn-382, Phe-383 to Gln-430, Leu-432 to Glu-478, Lys-479 to Asn-520, and Leu-522 to Cys-572.

The polypeptide is Kelch-like protein 38 (Klhl38) (Rattus norvegicus (Rat)).